The sequence spans 275 residues: 4-diphosphocytidyl-2-C-methyl-D-erythritol kinase (275 aa).

K14 is an active-site residue. Position 98 to 108 (P98 to S108) interacts with ATP. D140 is a catalytic residue.

It belongs to the GHMP kinase family. IspE subfamily.

The enzyme catalyses 4-CDP-2-C-methyl-D-erythritol + ATP = 4-CDP-2-C-methyl-D-erythritol 2-phosphate + ADP + H(+). The protein operates within isoprenoid biosynthesis; isopentenyl diphosphate biosynthesis via DXP pathway; isopentenyl diphosphate from 1-deoxy-D-xylulose 5-phosphate: step 3/6. Catalyzes the phosphorylation of the position 2 hydroxy group of 4-diphosphocytidyl-2C-methyl-D-erythritol. This is 4-diphosphocytidyl-2-C-methyl-D-erythritol kinase from Francisella tularensis subsp. holarctica (strain FTNF002-00 / FTA).